The following is a 366-amino-acid chain: tRNA/tmRNA (uracil-C(5))-methyltransferase (366 aa).

S-adenosyl-L-methionine-binding residues include Q189, Y217, N222, E238, and D298. The active-site Nucleophile is C323. Residue E357 is the Proton acceptor of the active site.

Belongs to the class I-like SAM-binding methyltransferase superfamily. RNA M5U methyltransferase family. TrmA subfamily.

The catalysed reaction is uridine(54) in tRNA + S-adenosyl-L-methionine = 5-methyluridine(54) in tRNA + S-adenosyl-L-homocysteine + H(+). It carries out the reaction uridine(341) in tmRNA + S-adenosyl-L-methionine = 5-methyluridine(341) in tmRNA + S-adenosyl-L-homocysteine + H(+). In terms of biological role, dual-specificity methyltransferase that catalyzes the formation of 5-methyluridine at position 54 (m5U54) in all tRNAs, and that of position 341 (m5U341) in tmRNA (transfer-mRNA). In Idiomarina loihiensis (strain ATCC BAA-735 / DSM 15497 / L2-TR), this protein is tRNA/tmRNA (uracil-C(5))-methyltransferase.